The following is a 510-amino-acid chain: NAD(P)H-quinone oxidoreductase subunit 2 B, chloroplastic (510 aa).

Transmembrane regions (helical) follow at residues 24-44 (LLLF…GLIL), 57-77 (IPWL…ALLF), 99-119 (IFQF…VEYI), 124-144 (MAIA…MFLC), 149-169 (LITI…LSGY), 183-203 (YLLM…WLYG), 227-247 (PGIS…LSPA), 295-315 (WHLL…LIAI), 323-343 (MLAY…IVGD), 354-374 (YMLF…LFGL), 395-415 (ALSL…AGFF), 418-438 (LHLF…IGLL), and 484-504 (MIVC…IIAI).

The protein belongs to the complex I subunit 2 family. As to quaternary structure, NDH is composed of at least 16 different subunits, 5 of which are encoded in the nucleus.

The protein resides in the plastid. Its subcellular location is the chloroplast thylakoid membrane. The catalysed reaction is a plastoquinone + NADH + (n+1) H(+)(in) = a plastoquinol + NAD(+) + n H(+)(out). It carries out the reaction a plastoquinone + NADPH + (n+1) H(+)(in) = a plastoquinol + NADP(+) + n H(+)(out). NDH shuttles electrons from NAD(P)H:plastoquinone, via FMN and iron-sulfur (Fe-S) centers, to quinones in the photosynthetic chain and possibly in a chloroplast respiratory chain. The immediate electron acceptor for the enzyme in this species is believed to be plastoquinone. Couples the redox reaction to proton translocation, and thus conserves the redox energy in a proton gradient. The protein is NAD(P)H-quinone oxidoreductase subunit 2 B, chloroplastic of Gossypium hirsutum (Upland cotton).